A 270-amino-acid chain; its full sequence is NADPH-dependent 7-cyano-7-deazaguanine reductase (270 aa).

Residue 79 to 81 participates in substrate binding; that stretch reads IES. 81–82 lines the NADPH pocket; that stretch reads SK. Cys-177 acts as the Thioimide intermediate in catalysis. Asp-184 acts as the Proton donor in catalysis. 216-217 contacts substrate; the sequence is HE. 245–246 contacts NADPH; sequence RG.

This sequence belongs to the GTP cyclohydrolase I family. QueF type 2 subfamily. Homodimer.

It localises to the cytoplasm. It catalyses the reaction 7-aminomethyl-7-carbaguanine + 2 NADP(+) = 7-cyano-7-deazaguanine + 2 NADPH + 3 H(+). It participates in tRNA modification; tRNA-queuosine biosynthesis. In terms of biological role, catalyzes the NADPH-dependent reduction of 7-cyano-7-deazaguanine (preQ0) to 7-aminomethyl-7-deazaguanine (preQ1). The protein is NADPH-dependent 7-cyano-7-deazaguanine reductase of Acinetobacter baumannii (strain AB307-0294).